A 326-amino-acid polypeptide reads, in one-letter code: Pyruvate dehydrogenase E1 component subunit beta (326 aa).

Glu62 is a binding site for thiamine diphosphate.

In terms of assembly, heterodimer of an alpha and a beta chain. Thiamine diphosphate is required as a cofactor.

The catalysed reaction is N(6)-[(R)-lipoyl]-L-lysyl-[protein] + pyruvate + H(+) = N(6)-[(R)-S(8)-acetyldihydrolipoyl]-L-lysyl-[protein] + CO2. Its function is as follows. The pyruvate dehydrogenase complex catalyzes the overall conversion of pyruvate to acetyl-CoA and CO(2). It contains multiple copies of three enzymatic components: pyruvate dehydrogenase (E1), dihydrolipoamide acetyltransferase (E2) and lipoamide dehydrogenase (E3). The protein is Pyruvate dehydrogenase E1 component subunit beta (pdhB) of Mycoplasma genitalium (strain ATCC 33530 / DSM 19775 / NCTC 10195 / G37) (Mycoplasmoides genitalium).